The chain runs to 504 residues: Phosphoenolpyruvate carboxylase (504 aa).

Residues 1-16 are compositionally biased toward polar residues; it reads MTSRKIPSIMGTQHPD. The tract at residues 1–21 is disordered; the sequence is MTSRKIPSIMGTQHPDNANAP.

It belongs to the PEPCase type 2 family. In terms of assembly, homotetramer. Mg(2+) serves as cofactor.

It catalyses the reaction oxaloacetate + phosphate = phosphoenolpyruvate + hydrogencarbonate. In terms of biological role, catalyzes the irreversible beta-carboxylation of phosphoenolpyruvate (PEP) to form oxaloacetate (OAA), a four-carbon dicarboxylic acid source for the tricarboxylic acid cycle. The polypeptide is Phosphoenolpyruvate carboxylase (Leuconostoc mesenteroides subsp. mesenteroides (strain ATCC 8293 / DSM 20343 / BCRC 11652 / CCM 1803 / JCM 6124 / NCDO 523 / NBRC 100496 / NCIMB 8023 / NCTC 12954 / NRRL B-1118 / 37Y)).